Consider the following 532-residue polypeptide: Glycerophosphocholine permease GIT4 (532 aa).

Transmembrane regions (helical) follow at residues 55–75 (LWPA…NAGI), 98–118 (NIGS…GYIS), 126–146 (GMLT…VASW), 150–170 (VQGF…AIGA), 201–221 (AMID…LWIF), and 229–249 (VWRL…FIRL). N-linked (GlcNAc...) asparagine glycosylation occurs at asparagine 266. The helical transmembrane segment at 272-292 (WWLIIKFYWFRLTVVSLIWFI) threads the bilayer. An N-linked (GlcNAc...) asparagine glycan is attached at asparagine 314. 3 helical membrane-spanning segments follow: residues 321 to 341 (WGWS…GAFI), 349 to 369 (LTLA…SACL), and 375 to 395 (HVAG…FGPG). A glycan (N-linked (GlcNAc...) asparagine) is linked at asparagine 396. A run of 2 helical transmembrane segments spans residues 416 to 436 (GIAA…FPAI) and 450 to 470 (VPFY…IFFV).

This sequence belongs to the major facilitator superfamily. Sugar transporter (TC 2.A.1.1) family.

Its subcellular location is the cell membrane. The catalysed reaction is sn-glycerol 3-phosphocholine(out) = sn-glycerol 3-phosphocholine(in). In terms of biological role, glycerophosphodiester transporter that mediates uptake of glycerophosphocholine (GroPCho) with GIT3. Does not possess detectable glycerophosphoinositol (GroPIns) transport activity. The expanded ability to utilize GroPIns and GroPCho results from the organism's pathogenic nature and its need to occupy a variety of environments within its host organism. This possibility is buttressed by the fact that GroPIns and GroPCho are present and abundant in human fluids. The polypeptide is Glycerophosphocholine permease GIT4 (Candida albicans (strain SC5314 / ATCC MYA-2876) (Yeast)).